A 761-amino-acid polypeptide reads, in one-letter code: 5-methyltetrahydropteroyltriglutamate--homocysteine methyltransferase (761 aa).

5-methyltetrahydropteroyltri-L-glutamate contacts are provided by residues 16-19 and Lys116; that span reads RELK. Residues 437-439 and Glu490 contribute to the L-homocysteine site; that span reads IGS. Residues 437–439 and Glu490 contribute to the L-methionine site; that span reads IGS. Residues 521 to 522 and Trp567 each bind 5-methyltetrahydropteroyltri-L-glutamate; that span reads RC. Asp605 is an L-homocysteine binding site. Asp605 provides a ligand contact to L-methionine. Glu611 is a binding site for 5-methyltetrahydropteroyltri-L-glutamate. The Zn(2+) site is built by His647, Cys649, and Glu671. His700 serves as the catalytic Proton donor. Cys732 contributes to the Zn(2+) binding site.

This sequence belongs to the vitamin-B12 independent methionine synthase family. Zn(2+) serves as cofactor.

It carries out the reaction 5-methyltetrahydropteroyltri-L-glutamate + L-homocysteine = tetrahydropteroyltri-L-glutamate + L-methionine. It participates in amino-acid biosynthesis; L-methionine biosynthesis via de novo pathway; L-methionine from L-homocysteine (MetE route): step 1/1. Catalyzes the transfer of a methyl group from 5-methyltetrahydrofolate to homocysteine resulting in methionine formation. The protein is 5-methyltetrahydropteroyltriglutamate--homocysteine methyltransferase of Chromohalobacter salexigens (strain ATCC BAA-138 / DSM 3043 / CIP 106854 / NCIMB 13768 / 1H11).